Here is a 491-residue protein sequence, read N- to C-terminus: Conidiogenone synthase PchP450 (491 aa).

Residues 2–22 traverse the membrane as a helical segment; it reads LLLWFGFFSFVCGLVIYRLQF. Position 430 (C430) interacts with heme.

This sequence belongs to the cytochrome P450 family. The cofactor is heme.

The protein resides in the membrane. Its pathway is secondary metabolite biosynthesis; terpenoid biosynthesis. Cytochrome P450 monooxygenase; part of the gene cluster that mediates the biosynthesis of conidiogenone, a diterpene known to induce the conidiation. The bifunctional terpene synthase PrDS converts isopentenyl diphosphate (IPP) and dimethylallyl diphosphate (DMAPP) into deoxyconidiogenol. The C-terminal prenyltransferase (PT) domain of PrDS catalyzes formation of GGPP, whereas the N-terminal terpene cyclase (TC) domain catalyzes the cyclization of GGPP into deoxyconidiogenol. The cytochrome P450 monooxygenase PrP450 then catalyzes two rounds of oxidation to furnish conidiogenone. The chain is Conidiogenone synthase PchP450 from Penicillium rubens (strain ATCC 28089 / DSM 1075 / NRRL 1951 / Wisconsin 54-1255) (Penicillium chrysogenum).